The chain runs to 174 residues: Peptidyl-prolyl cis-trans isomerase D, mitochondrial (174 aa).

One can recognise a PPIase cyclophilin-type domain in the interval 10-173 (FFQIKQGNTP…AACVIEDCGQ (164 aa)).

Belongs to the cyclophilin-type PPIase family. PPIase D subfamily.

The protein localises to the mitochondrion. The catalysed reaction is [protein]-peptidylproline (omega=180) = [protein]-peptidylproline (omega=0). Binds cyclosporin A (CsA). CsA mediates some of its effects via an inhibitory action on PPIase. Functionally, PPIases accelerate the folding of proteins. It catalyzes the cis-trans isomerization of proline imidic peptide bonds in oligopeptides. The chain is Peptidyl-prolyl cis-trans isomerase D, mitochondrial (cypD) from Dictyostelium discoideum (Social amoeba).